We begin with the raw amino-acid sequence, 340 residues long: Phosphate acyltransferase (340 aa).

Belongs to the PlsX family. In terms of assembly, homodimer. Probably interacts with PlsY.

The protein localises to the cytoplasm. The catalysed reaction is a fatty acyl-[ACP] + phosphate = an acyl phosphate + holo-[ACP]. It functions in the pathway lipid metabolism; phospholipid metabolism. Catalyzes the reversible formation of acyl-phosphate (acyl-PO(4)) from acyl-[acyl-carrier-protein] (acyl-ACP). This enzyme utilizes acyl-ACP as fatty acyl donor, but not acyl-CoA. In Trichodesmium erythraeum (strain IMS101), this protein is Phosphate acyltransferase.